A 438-amino-acid polypeptide reads, in one-letter code: Polycomb protein eed-A (438 aa).

The segment at 1 to 67 (MSEASGRAAG…NAPGRKAWGK (67 aa)) is disordered. The span at 40 to 57 (SIESGTNTERPDTPTNAA) shows a compositional bias: polar residues. WD repeat units follow at residues 88-131 (DHNQ…DIRL), 139-182 (DADE…CIKH), 185-225 (GHGN…LVAI), 231-270 (GHRD…MKTA), 301-338 (IHRN…DDID), 356-396 (SQCD…PHKA), and 405-438 (KCAS…DRLR).

This sequence belongs to the WD repeat ESC family. As to quaternary structure, component of the prc2/eed-ezh2 complex. Interacts with yy1. Can interact with ezh2, hdac1 and taf9.

Its subcellular location is the nucleus. Polycomb group (PcG) protein. Component of the prc2/eed-ezh2 complex, which methylates 'Lys-9' and 'Lys-27' of histone H3, leading to transcriptional repression of the affected target gene. This Xenopus laevis (African clawed frog) protein is Polycomb protein eed-A (eed-a).